The following is a 167-amino-acid chain: Small ribosomal subunit protein uS9 (167 aa).

The interval 136–167 (KRAGFLTRDPRATERKKYGLKKARKAPQYSKR) is disordered. The span at 143–152 (RDPRATERKK) shows a compositional bias: basic and acidic residues. A compositionally biased stretch (basic residues) spans 153 to 167 (YGLKKARKAPQYSKR).

This sequence belongs to the universal ribosomal protein uS9 family.

The protein is Small ribosomal subunit protein uS9 of Nocardia farcinica (strain IFM 10152).